The primary structure comprises 891 residues: Metabotropic glutamate receptor-like protein N (891 aa).

Residues 1–399 (MKLYTHKINR…FKPISKTIEY (399 aa)) lie on the Extracellular side of the membrane. N-linked (GlcNAc...) asparagine glycans are attached at residues asparagine 52, asparagine 85, asparagine 88, asparagine 125, asparagine 132, asparagine 224, asparagine 298, asparagine 312, asparagine 320, asparagine 325, asparagine 353, asparagine 363, and asparagine 375. The disordered stretch occupies residues 52–91 (NNSNSNSNNNNNNNNNNNNNNNNNNNNNNNNNNNNSNNSN). A helical transmembrane segment spans residues 400 to 420 (GITIVSSILIGALIIIQICII). Residues 421-433 (KYKNKPSFKSASP) are Cytoplasmic-facing. The helical transmembrane segment at 434-454 (TFLIFIVIGGIFVYIGVIIWV) threads the bilayer. The Extracellular segment spans residues 455–461 (SGVNVFT). A helical membrane pass occupies residues 462-482 (CNAKFWLISLGLTTMIGGIVV). Residues 483–505 (KNFRIWLIFDNPKLYHIKITNLQ) are Cytoplasmic-facing. A helical transmembrane segment spans residues 506-526 (LLPWVLGMFLLNVFLLSLITG). Over 527–555 (LGKLTPFKVFPNDEKFSSYEIQCEMMDGG) the chain is Extracellular. A helical membrane pass occupies residues 556–576 (LIALYFLLGYFAIIVMIGIFV). Over 577–592 (SWKIRIVDIEEFNESK) the chain is Cytoplasmic. A helical membrane pass occupies residues 593 to 613 (SVAYSLYSIVFCLLIIAPLTI). The Extracellular segment spans residues 614 to 625 (SKTGHNTEILCS). A helical membrane pass occupies residues 626–646 (GFIFIVAAIITIMFIPKFWAL). Over 647-891 (KIYGAEGSNE…SDSNSDSIIQ (245 aa)) the chain is Cytoplasmic. Disordered regions lie at residues 660-689 (QSSS…KKSS), 742-827 (NEMT…ILTP), and 869-891 (DEVI…SIIQ). A compositionally biased stretch (polar residues) spans 742–767 (NEMTYNDDPTYTEPSEQPTYTESSEQ). The segment covering 772–782 (PRTLTATPRTN) has biased composition (low complexity). The span at 783-820 (DLTTPRTNDLTTPRTNDLITPRTNDLSTPRTNDLNTPR) shows a compositional bias: polar residues. The span at 872–881 (IENSDSESES) shows a compositional bias: acidic residues. Low complexity predominate over residues 882–891 (SDSNSDSIIQ).

The protein belongs to the G-protein coupled receptor 3 family. GABA-B receptor subfamily.

Its subcellular location is the membrane. The sequence is that of Metabotropic glutamate receptor-like protein N (grlN) from Dictyostelium discoideum (Social amoeba).